The primary structure comprises 289 residues: MTDNTVWHETLHDQFGQYFAVDNVLYHEKTDHQDLIIFENAAFGRVMALDGVVQTTERDEFIYHEMMTHVPLLAHGHAKHVLIIGGGDGAMLREVSRHKSIETITMVEIDAGVVSFCRQYLPNHNAGSYDDPRFTLVIDDGVNFVNQSHQTFDVIISDCTDPIGPGATLFTSSFYEGCKRCLNPGGIFVAQNGVCFLQQDEAIDSHRKLSHYFGDVSFYQAAIPTYYGGIMTFAWATDNDVLRHLSTEIIAARFHQTHLKCRYYNPAVHTAAFALPQYLQDALSPKEVS.

A PABS domain is found at 5–238; that stretch reads TVWHETLHDQ…GIMTFAWATD (234 aa). Position 33 (Q33) interacts with S-methyl-5'-thioadenosine. Spermidine contacts are provided by H64 and D88. S-methyl-5'-thioadenosine is bound by residues E108 and 140 to 141; that span reads DG. D158 acts as the Proton acceptor in catalysis. A spermidine-binding site is contributed by 158 to 161; it reads DCTD. P165 provides a ligand contact to S-methyl-5'-thioadenosine.

It belongs to the spermidine/spermine synthase family. As to quaternary structure, homodimer or homotetramer.

Its subcellular location is the cytoplasm. The enzyme catalyses S-adenosyl 3-(methylsulfanyl)propylamine + putrescine = S-methyl-5'-thioadenosine + spermidine + H(+). The protein operates within amine and polyamine biosynthesis; spermidine biosynthesis; spermidine from putrescine: step 1/1. Catalyzes the irreversible transfer of a propylamine group from the amino donor S-adenosylmethioninamine (decarboxy-AdoMet) to putrescine (1,4-diaminobutane) to yield spermidine. This chain is Polyamine aminopropyltransferase, found in Enterobacter sp. (strain 638).